Here is a 90-residue protein sequence, read N- to C-terminus: Small ribosomal subunit protein bS16 (90 aa).

It belongs to the bacterial ribosomal protein bS16 family.

The sequence is that of Small ribosomal subunit protein bS16 from Streptococcus pyogenes serotype M4 (strain MGAS10750).